The sequence spans 161 residues: Transcription elongation factor GreA (161 aa).

Residues 46–71 (AEYTAAKEKQSFLHGKLQELENNLAL) adopt a coiled-coil conformation.

This sequence belongs to the GreA/GreB family.

In terms of biological role, necessary for efficient RNA polymerase transcription elongation past template-encoded arresting sites. The arresting sites in DNA have the property of trapping a certain fraction of elongating RNA polymerases that pass through, resulting in locked ternary complexes. Cleavage of the nascent transcript by cleavage factors such as GreA or GreB allows the resumption of elongation from the new 3'terminus. GreA releases sequences of 2 to 3 nucleotides. This chain is Transcription elongation factor GreA, found in Syntrophus aciditrophicus (strain SB).